The primary structure comprises 290 residues: uncharacterized protein (290 aa).

The signal sequence occupies residues 1 to 25 (MNKKSILSKTSLGSLFFLFGTALSA). Cys-26 carries N-palmitoyl cysteine lipidation. Cys-26 is lipidated: S-diacylglycerol cysteine. The tract at residues 183-203 (GTDSKGSGSNNQNGGVTEKDF) is disordered. Low complexity predominate over residues 186–197 (SKGSGSNNQNGG).

This sequence belongs to the MG439/MG440 family.

The protein resides in the cell membrane. This is an uncharacterized protein from Mycoplasma pneumoniae (strain ATCC 29342 / M129 / Subtype 1) (Mycoplasmoides pneumoniae).